A 191-amino-acid chain; its full sequence is Ribonuclease M5 (191 aa).

The 84-residue stretch at 8 to 91 folds into the Toprim domain; that stretch reads HEFIVVEGRD…AFINRQDALP (84 aa). Positions 14, 60, and 62 each coordinate Mg(2+).

The protein belongs to the ribonuclease M5 family. The cofactor is Mg(2+).

It localises to the cytoplasm. It carries out the reaction Endonucleolytic cleavage of RNA, removing 21 and 42 nucleotides, respectively, from the 5'- and 3'-termini of a 5S-rRNA precursor.. Functionally, required for correct processing of both the 5' and 3' ends of 5S rRNA precursor. Cleaves both sides of a double-stranded region yielding mature 5S rRNA in one step. The protein is Ribonuclease M5 of Listeria monocytogenes serovar 1/2a (strain ATCC BAA-679 / EGD-e).